The sequence spans 420 residues: MANVSPVHGGLSEPVNRVVDSLPSTELLPKIVVNATDYTTLHRIADGTLSPLTGPMTKADYDSVLLKKGIERDGKLWAWTIPLSLPVTAEEAKALKAGEPAALVSESGDVFGTLTVDAAFSWDKPAFLKAVYGTERTDHPGARLWLDDPRTDLVGGSISVLAHDEARPFKDRILYPQSMRALLKEQGYGASVAFQTRNPLHRAHEYALVYGAEKLLKEVGDSSKVGVFLNPLVGQLKGDDVPAATRMETYIKLIDGGFIGEGDMDEELWKSKGQNLREQTRLAGLDMRMFYGGPSEAVMHAIYRQNLGITHFIIGRKHADAPFDDKSAIWGDFDAQEIFEKLEGDLQIKTVNVGFAAYFEELGHVGLCSENKGKTTVSISGSKMREMLNSGSMPDSRVMRPATAQVLMDYYAAKNKSATA.

Alanine 2 carries the N-acetylalanine modification.

The protein belongs to the sulfate adenylyltransferase family. Mg(2+) is required as a cofactor.

The catalysed reaction is sulfate + ATP + H(+) = adenosine 5'-phosphosulfate + diphosphate. The protein operates within sulfur metabolism; hydrogen sulfide biosynthesis; sulfite from sulfate: step 1/3. Its activity is regulated as follows. Inhibited by adenosine 5'-phosphosulfate (APS), but not by 3'phosphoadenosine 5'-phosphosulfate (PAPS). Inhibited by AMP, ADP, CTP, GTP, ITP, UTP and anions other than those in group IV. This Pyropia yezoensis (Susabi-nori) protein is Sulfate adenylyltransferase.